Consider the following 356-residue polypeptide: L-Ala-D/L-Glu epimerase (356 aa).

A substrate-binding site is contributed by 161 to 163 (KVK). 3 residues coordinate Mg(2+): D191, E219, and D244. Substrate is bound by residues K268 and 320-322 (DLD).

It belongs to the mandelate racemase/muconate lactonizing enzyme family. Mg(2+) serves as cofactor.

It carries out the reaction L-alanyl-L-glutamate = L-alanyl-D-glutamate. Its function is as follows. Dipeptide epimerase with a preference for substrates containing a Glu residue in the second position. Catalyzes the epimerization of L-Ala-L-Glu, L-Ser-L-Glu, L-Thr-L-Glu, L-Val-L-Glu, L-Gly-L-Glu and L-Thr-L-Glu (in vitro). May play a role in the metabolism of the murein peptide, of which L-Ala-D-Glu is a component. This is L-Ala-D/L-Glu epimerase from Francisella tularensis subsp. novicida (strain U112).